Here is a 1325-residue protein sequence, read N- to C-terminus: Nucleoporin nup146 (1325 aa).

Disordered stretches follow at residues 1-20, 453-474, 758-951, and 973-994; these read MNAENTFSILNTNEPNAGGS, VRASNNENIPTPDKQASPFVKN, GEGL…PKIH, and FPKQPLVVQSTDKNKKEPQESL. Positions 763–778 are enriched in polar residues; it reads QQKTSKALPSTGITKL. A compositionally biased stretch (basic and acidic residues) spans 779 to 791; that stretch reads SENDNEKAEESNE. Polar residues predominate over residues 792–801; the sequence is TKGFNTTIAK. The segment covering 802 to 811 has biased composition (basic and acidic residues); the sequence is QNDKSSKSEG. Polar residues-rich tracts occupy residues 816 to 835 and 850 to 861; these read ANMSALNKSTNNETSDSKPS and FTFNKPSETPPF. Residues 867–881 show a composition bias toward basic and acidic residues; it reads LVEKESKQDVSDTSD. T899 bears the Phosphothreonine mark. The span at 927–937 shows a compositional bias: acidic residues; the sequence is SEIEDQDEESS. Position 946 is a phosphothreonine (T946). S1041, S1043, and S1044 each carry phosphoserine.

It localises to the cytoplasm. It is found in the nucleus. Functionally, functions as a component of the nuclear pore complex (NPC). NPC components, collectively referred to as nucleoporins (NUPs), can play the role of both NPC structural components and of docking or interaction partners for transiently associated nuclear transport factors. Active directional transport is assured by both, a Phe-Gly (FG) repeat affinity gradient for these transport factors across the NPC and a transport cofactor concentration gradient across the nuclear envelope. The sequence is that of Nucleoporin nup146 (nup146) from Schizosaccharomyces pombe (strain 972 / ATCC 24843) (Fission yeast).